The primary structure comprises 129 residues: Phosphoribosyl-AMP cyclohydrolase (129 aa).

Mg(2+) is bound at residue D76. C77 contacts Zn(2+). Residues D78 and D80 each coordinate Mg(2+). Residues C97 and C104 each contribute to the Zn(2+) site.

This sequence belongs to the PRA-CH family. As to quaternary structure, homodimer. The cofactor is Mg(2+). Zn(2+) is required as a cofactor.

The protein resides in the cytoplasm. The catalysed reaction is 1-(5-phospho-beta-D-ribosyl)-5'-AMP + H2O = 1-(5-phospho-beta-D-ribosyl)-5-[(5-phospho-beta-D-ribosylamino)methylideneamino]imidazole-4-carboxamide. It functions in the pathway amino-acid biosynthesis; L-histidine biosynthesis; L-histidine from 5-phospho-alpha-D-ribose 1-diphosphate: step 3/9. In terms of biological role, catalyzes the hydrolysis of the adenine ring of phosphoribosyl-AMP. This chain is Phosphoribosyl-AMP cyclohydrolase, found in Polaromonas naphthalenivorans (strain CJ2).